A 275-amino-acid polypeptide reads, in one-letter code: Probable endonuclease 4 (275 aa).

Zn(2+)-binding residues include His66, His106, Glu140, Asp172, His175, His209, Asp222, His224, and Glu254.

It belongs to the AP endonuclease 2 family. The cofactor is Zn(2+).

The catalysed reaction is Endonucleolytic cleavage to 5'-phosphooligonucleotide end-products.. In terms of biological role, endonuclease IV plays a role in DNA repair. It cleaves phosphodiester bonds at apurinic or apyrimidinic (AP) sites, generating a 3'-hydroxyl group and a 5'-terminal sugar phosphate. This is Probable endonuclease 4 from Halobacterium salinarum (strain ATCC 29341 / DSM 671 / R1).